The sequence spans 544 residues: Tyrosyl-DNA phosphodiesterase 1 (544 aa).

Histidine 182 functions as the Nucleophile in the catalytic mechanism. Residue lysine 184 coordinates substrate. Positions 312–316 (SIGTS) are interaction with DNA. Histidine 432 functions as the Proton donor/acceptor in the catalytic mechanism. Position 434 (lysine 434) interacts with substrate.

Belongs to the tyrosyl-DNA phosphodiesterase family.

The protein localises to the nucleus. Functionally, DNA repair enzyme that can remove a variety of covalent adducts from DNA through hydrolysis of a 3'-phosphodiester bond, giving rise to DNA with a free 3' phosphate. Catalyzes the hydrolysis of dead-end complexes between DNA and the topoisomerase I active site tyrosine residue. Hydrolyzes 3'-phosphoglycolates on protruding 3' ends on DNA double-strand breaks due to DNA damage by radiation and free radicals. Also cleaves 5' phosphotyrosyl adducts resulting from dead-end complexes between DNA and the active site tyrosine of topoisomerase II. Contributes to DNA repair after radiation damage. Acts on blunt-ended double-strand DNA breaks and on single-stranded DNA. May have low 3'exonuclease activity and may be able to remove a single nucleoside from the 3'end of DNA and RNA molecules with 3'hydroxyl groups. Has no exonuclease activity towards DNA or RNA with a 3'phosphate. The polypeptide is Tyrosyl-DNA phosphodiesterase 1 (TDP1) (Saccharomyces cerevisiae (strain ATCC 204508 / S288c) (Baker's yeast)).